Reading from the N-terminus, the 761-residue chain is Xaa-Pro dipeptidyl-peptidase (761 aa).

Active-site charge relay system residues include serine 347, aspartate 467, and histidine 497.

The protein belongs to the peptidase S15 family. In terms of assembly, homodimer.

It localises to the cytoplasm. The enzyme catalyses Hydrolyzes Xaa-Pro-|- bonds to release unblocked, N-terminal dipeptides from substrates including Ala-Pro-|-p-nitroanilide and (sequentially) Tyr-Pro-|-Phe-Pro-|-Gly-Pro-|-Ile.. Functionally, removes N-terminal dipeptides sequentially from polypeptides having unsubstituted N-termini provided that the penultimate residue is proline. This is Xaa-Pro dipeptidyl-peptidase from Streptococcus agalactiae serotype III (strain NEM316).